Here is a 142-residue protein sequence, read N- to C-terminus: Large ribosomal subunit protein uL13 (142 aa).

This sequence belongs to the universal ribosomal protein uL13 family. Part of the 50S ribosomal subunit.

In terms of biological role, this protein is one of the early assembly proteins of the 50S ribosomal subunit, although it is not seen to bind rRNA by itself. It is important during the early stages of 50S assembly. The sequence is that of Large ribosomal subunit protein uL13 from Xylella fastidiosa (strain 9a5c).